The following is a 368-amino-acid chain: Aminomethyltransferase (368 aa).

This sequence belongs to the GcvT family. As to quaternary structure, the glycine cleavage system is composed of four proteins: P, T, L and H.

The enzyme catalyses N(6)-[(R)-S(8)-aminomethyldihydrolipoyl]-L-lysyl-[protein] + (6S)-5,6,7,8-tetrahydrofolate = N(6)-[(R)-dihydrolipoyl]-L-lysyl-[protein] + (6R)-5,10-methylene-5,6,7,8-tetrahydrofolate + NH4(+). The glycine cleavage system catalyzes the degradation of glycine. This Xylella fastidiosa (strain M12) protein is Aminomethyltransferase.